Consider the following 666-residue polypeptide: Neopullulanase 1 (666 aa).

An N-terminal signal peptide occupies residues 1–29; sequence MIKLLKPMSLSILLVFILSFSFPFPTAKA. 11 residues coordinate Ca(2+): alanine 31, aspartate 33, asparagine 35, aspartate 71, aspartate 125, asparagine 174, aspartate 176, asparagine 179, aspartate 180, glycine 216, and aspartate 218. Position 296 (histidine 296) interacts with substrate. The Ca(2+) site is built by aspartate 305, asparagine 309, phenylalanine 310, serine 312, and glutamate 317. Position 383 (arginine 383) interacts with substrate. The Nucleophile role is filled by aspartate 385. Glutamate 425 functions as the Proton donor in the catalytic mechanism. Substrate contacts are provided by residues 500-501, aspartate 545, and arginine 549; that span reads HD.

Belongs to the glycosyl hydrolase 13 family. It depends on Ca(2+) as a cofactor.

It localises to the secreted. It catalyses the reaction Hydrolysis of pullulan to panose (6-alpha-D-glucosylmaltose).. Endohydrolysis of 1,4-alpha-glucosidic linkages in pullulan to form panose. Also hydrolyzes cyclodextrins. This chain is Neopullulanase 1 (tvaI), found in Thermoactinomyces vulgaris.